A 255-amino-acid chain; its full sequence is Small ribosomal subunit protein uS2 (255 aa).

Residues 233-255 (DFVAEEAASEESLEELAEIVEGK) are disordered.

The protein belongs to the universal ribosomal protein uS2 family.

This is Small ribosomal subunit protein uS2 (rpsB) from Lactococcus lactis subsp. lactis (strain IL1403) (Streptococcus lactis).